The primary structure comprises 524 residues: Unconventional prefoldin RPB5 interactor (524 aa).

Disordered regions lie at residues 1–20, 284–320, and 335–373; these read MEAP…LRAP, SVNG…EDNS, and VRIN…ELPM. Over residues 296 to 307 the composition is skewed to acidic residues; the sequence is DDGDNNDDGGDS. Residue S361 is modified to Phosphoserine; by RPS6KB1. The residue at position 431 (S431) is a Phosphoserine.

It belongs to the RNA polymerase II subunit 5-mediating protein family. Homodimer. Component of the PAQosome complex which is responsible for the biogenesis of several protein complexes and which consists of R2TP complex members RUVBL1, RUVBL2, RPAP3 and PIH1D1, URI complex members PFDN2, PFDN6, PDRG1, UXT and URI1 as well as ASDURF, POLR2E and DNAAF10/WDR92. Interacts with POLR2E/RPB5, RUVBL2 and RUVBL1. Interacts with PFDN2, PFDN4 and STAP1; the interactions are phosphorylation-dependent and occur in a growth-dependent manner in the mitochondrion. Interacts with UXT. Interacts with PPP1CC; the interaction is phosphorylation-dependent and occurs in a growth factor-dependent manner. Interacts (via the middle C-terminal region) with GTF2F1 and GTF2F2. Interacts with DMAP1. Interacts with TSC1 and TSC2. Interacts with PRPF8 and EFTUD2 in a ZNHIT2-dependent manner. Phosphorylated. Phosphorylation occurs essentially on serine residues. Phosphorylation occurs in response to androgen treatment in prostate cancer cells in a mTOR-dependent manner. Phosphorylated; hyperhosphorylated in mitochondria in a mTORC-dependent signaling pathway. Phosphorylated at Ser-361 by RPS6KB1 in a growth factor- and rapamycin-dependent manner. S6K1-mediated mitochondrial phosphorylation at Ser-361 disrupts the URI1-PPP1CC complex in the mitochondrion, relieves PPP1CC phosphatase inhibition activity and hence engages a negative feedback diminishing RPS6KB1 kinase activity, preventing sustained S6K1-dependent signaling.

It is found in the nucleus. It localises to the cytoplasm. The protein localises to the mitochondrion. Its subcellular location is the cell projection. The protein resides in the dendrite. Functionally, involved in gene transcription regulation. Acts as a transcriptional repressor in concert with the corepressor UXT to regulate androgen receptor (AR) transcription. May act as a tumor suppressor to repress AR-mediated gene transcription and to inhibit anchorage-independent growth in prostate cancer cells. Required for cell survival in ovarian cancer cells. Together with UXT, associates with chromatin to the NKX3-1 promoter region. Plays a central role in maintaining S6K1 signaling and BAD phosphorylation under normal growth conditions thereby protecting cells from potential deleterious effects of sustained S6K1 signaling. The URI1-PPP1CC complex acts as a central component of a negative feedback mechanism that counteracts excessive S6K1 survival signaling to BAD in response to growth factors. Mediates inhibition of PPP1CC phosphatase activity in mitochondria. Coordinates the regulation of nutrient-sensitive gene expression availability in a mTOR-dependent manner. Seems to be a scaffolding protein able to assemble a prefoldin-like complex that contains PFDs and proteins with roles in transcription and ubiquitination. The sequence is that of Unconventional prefoldin RPB5 interactor (URI1) from Bos taurus (Bovine).